The sequence spans 2467 residues: Polyprotein P1234 (2467 aa).

The 232-residue stretch at 27–258 folds into the Alphavirus-like MT domain; the sequence is ESQQVTPNDH…ESRKLLRSWH (232 aa). Residues 243-262 form a nsP1 membrane-binding region; the sequence is GSTLYTESRKLLRSWHLPSV. S-palmitoyl cysteine; by host attachment occurs at residues Cys-416 and Cys-418. The 153-residue stretch at 689–841 folds into the (+)RNA virus helicase ATP-binding domain; it reads DLINPPFHEF…HNICTRVLHK (153 aa). Residue 720–727 coordinates a ribonucleoside 5'-triphosphate; it reads GVPGSGKS. The (+)RNA virus helicase C-terminal domain occupies 842 to 990; sequence SISRRCTLPV…LEEWHEEHDG (149 aa). In terms of domain architecture, Peptidase C9 spans 1003–1325; the sequence is DPFQNKAKVC…QKLSSMYACN (323 aa). A nucleolus localization signal region spans residues 1004–1023; the sequence is PFQNKAKVCWAKCLVQVLET. Cys-1012 (for cysteine protease nsP2 activity) is an active-site residue. The Nuclear export signal signature appears at 1056–1065; that stretch reads TRYYGVDLDS. The For cysteine protease nsP2 activity role is filled by His-1081. The Nuclear localization signal signature appears at 1180–1184; sequence PHKRV. Positions 1333–1492 constitute a Macro domain; it reads APSYRVRRAD…KIQEAIDRRT (160 aa). Residues Asp-1342, Asn-1356, Gly-1364, Gly-1444, and Phe-1446 each coordinate ADP-D-ribose. 4 residues coordinate Zn(2+): Cys-1594, Cys-1596, Cys-1619, and Cys-1637. The segment at 1768–1803 is disordered; that stretch reads KVATEPPLEPEAPIPAPRKRRTTSTSPPHNPEDFVP. The span at 1774–1783 shows a compositional bias: pro residues; that stretch reads PLEPEAPIPA. Short sequence motifs (FGDF; binding to host G3BP1) lie at residues 1820–1823 and 1841–1844; these read FGDL and FGDI. Residues 2221-2336 enclose the RdRp catalytic domain; it reads DAVLETDIAS…HGVRSDPLMA (116 aa).

As to quaternary structure, interacts with non-structural protein 3. Interacts with RNA-directed RNA polymerase nsP4. Interacts with protease nsP2. interacts with itself. Interacts with mRNA-capping enzyme nsP1. Interacts with host DDX1. Interacts with host DDX3. Interacts (via C-terminus) with host G3BP1; this interaction inhibits the formation of host stress granules on viral mRNAs and the nsp3-G3BP1 complexes bind viral RNAs and probably orchestrate the assembly of viral replication complexes. Interacts (via C-terminus) with host G3BP2; this interaction inhibits the formation of host stress granules on viral mRNAs and the nsp3-G3BP2 complexes bind viral RNAs and probably orchestrate the assembly of viral replication complexes. In terms of assembly, interacts with mRNA-capping enzyme nsP1. Interacts with protease nsP2. interacts with itself. As to quaternary structure, interacts with RNA-directed RNA polymerase nsP4. Interacts with mRNA-capping enzyme nsP1. Interacts with KPNA1/karyopherin-alpha1; this interaction probably allows the active transport of protease nsP2 into the host nucleus. It depends on Mg(2+) as a cofactor. Requires Mn(2+) as cofactor. Specific enzymatic cleavages in vivo yield mature proteins. The processing of the polyprotein is temporally regulated. In early stages (1.7 hpi), P1234 is first cleaved in trans through its nsP2 protease activity, releasing P123' and nsP4, which associate to form the early replication complex. At the same time, P1234 is also cut at the nsP1/nsP2 site early in infection but with lower efficiency. After replication of the viral minus-strand RNAs (4 hpi), the polyproteins are cut at the nsP1/nsP2 and nsP2/nsP3 sites very efficiently, preventing accumulation of P123' and P1234 and allowing the formation of the late replication complex. NsP3'/nsP4 site is not cleaved anymore and P34 is produced rather than nsP4. Post-translationally, specific enzymatic cleavages in vivo yield mature proteins. The processing of the polyprotein is temporally regulated. In early stages (1.7 hpi), P123 is cleaved at the nsP1/nsP2 site with low efficiency. After replication of the viral minus-strand RNAs (4 hpi), the polyproteins are cut at the nsP1/nsP2 and nsP2/nsP3 sites very efficiently, preventing accumulation of P123 and allowing the formation of the late replication complex. In terms of processing, palmitoylated by host palmitoyltransferases ZDHHC2 and ZDHHC19. Phosphorylated by host on serines and threonines. Post-translationally, ubiquitinated; targets the protein for rapid degradation via the ubiquitin system. Nsp4 is present in extremely low quantities due to low frequency of translation through the amber stop-codon and the degradation by the ubiquitin pathway.

It localises to the host cytoplasmic vesicle membrane. It is found in the host cell membrane. The protein resides in the host cell projection. Its subcellular location is the host filopodium. The protein localises to the host nucleus. It localises to the host cytoplasm. It catalyses the reaction GTP + S-adenosyl-L-methionine = N(7)-methyl-GTP + S-adenosyl-L-homocysteine. The catalysed reaction is N(7)-methyl-GTP + L-histidyl-[protein] = N(tele)-(N(7)-methylguanosine 5'-phospho)-L-histidyl-[protein] + diphosphate. It carries out the reaction N(tele)-(N(7)-methylguanosine 5'-phospho)-L-histidyl-[protein] + a 5'-end diphospho-(purine-ribonucleoside) in mRNA + H(+) = a 5'-end (N(7)-methyl 5'-triphosphoguanosine)-(purine-ribonucleoside) in mRNA + L-histidyl-[protein]. The enzyme catalyses a 5'-end triphospho-ribonucleoside in mRNA + H2O = a 5'-end diphospho-ribonucleoside in mRNA + phosphate + H(+). It catalyses the reaction a ribonucleoside 5'-triphosphate + H2O = a ribonucleoside 5'-diphosphate + phosphate + H(+). The catalysed reaction is ATP + H2O = ADP + phosphate + H(+). It carries out the reaction RNA(n) + a ribonucleoside 5'-triphosphate = RNA(n+1) + diphosphate. The enzyme catalyses RNA(n) + ATP = RNA(n)-3'-adenine ribonucleotide + diphosphate. It catalyses the reaction 4-O-(ADP-D-ribosyl)-L-aspartyl-[protein] + H2O = L-aspartyl-[protein] + ADP-D-ribose + H(+). The catalysed reaction is 5-O-(ADP-D-ribosyl)-L-glutamyl-[protein] + H2O = L-glutamyl-[protein] + ADP-D-ribose + H(+). It carries out the reaction ADP-alpha-D-ribose 1''-phosphate + H2O = ADP-D-ribose + phosphate. Functionally, inactive precursor of the viral replicase, which is activated by cleavages carried out by the viral protease nsP2. In terms of biological role, the early replication complex formed by the polyprotein P123 and nsP4 synthesizes minus-strand RNAs. As soon P123 is cleaved into mature proteins, the plus-strand RNAs synthesis begins. Its function is as follows. The early replication complex formed by the polyprotein P123' and nsP4 synthesizes minus-strand RNAs. Polyprotein P123' is a short-lived polyprotein that accumulates during early stage of infection. As soon P123' is cleaved into mature proteins, the plus-strand RNAs synthesis begins. Cytoplasmic capping enzyme that catalyzes two virus-specific reactions: methyltransferase and nsP1 guanylyltransferase. mRNA-capping is necessary since all viral RNAs are synthesized in the cytoplasm, and host capping enzymes are restricted to the nucleus. The enzymatic reaction involves a covalent link between 7-methyl-GMP and nsP1, whereas eukaryotic capping enzymes form a covalent complex only with GMP. nsP1 capping consists in the following reactions: GTP is first methylated into 7-methyl-GMP and then is covalently linked to nsP1 to form the m7GMp-nsP1 complex from which 7-methyl-GMP complex is transferred to the mRNA to create the cap structure. NsP1 is needed for the initiation of the minus-strand RNAs synthesis. Probably serves as a membrane anchor for the replication complex composed of nsP1-nsP4. Palmitoylated nsP1 is remodeling host cell cytoskeleton, and induces filopodium-like structure formation at the surface of the host cell. Functionally, multifunctional protein whose N-terminus is part of the RNA polymerase complex and displays NTPase, RNA triphosphatase and helicase activities. NTPase and RNA triphosphatase are involved in viral RNA capping and helicase keeps a check on the dsRNA replication intermediates. The C-terminus harbors a protease that specifically cleaves the polyproteins and releases the mature proteins. Required for the shutoff of minus-strand RNAs synthesis. Specifically inhibits the host IFN response by promoting the nuclear export of host STAT1. Also inhibits host transcription by inducing rapid proteasome-dependent degradation of POLR2A, a catalytic subunit of the RNAPII complex. The resulting inhibition of cellular protein synthesis serves to ensure maximal viral gene expression and to evade host immune response. In terms of biological role, seems to be essential for minus-strand RNAs and subgenomic 26S mRNAs synthesis. Displays mono-ADP-ribosylhydrolase activity. ADP-ribosylation is a post-translational modification that controls various processes of the host cell and the virus probably needs to revert it for optimal viral replication. Binds proteins of FXR family and sequesters them into the viral RNA replication complexes thereby inhibiting the formation of host stress granules on viral mRNAs. The nsp3'-FXR complexes bind viral RNAs and probably orchestrate the assembly of viral replication complexes, thanks to the ability of FXR family members to self-assemble and bind DNA. Its function is as follows. Seems to be essential for minus-strand RNAs and subgenomic 26S mRNAs synthesis. Displays mono-ADP-ribosylhydrolase activity. ADP-ribosylation is a post-translantional modification that controls various processes of the host cell and the virus probably needs to revert it for optimal viral replication. Binds proteins of G3BP family and sequesters them into the viral RNA replication complexes thereby inhibiting the formation of host stress granules on viral mRNAs. The nsp3-G3BP complexes bind viral RNAs and probably orchestrate the assembly of viral replication complexes, thanks to the ability of G3BP family members to self-assemble and bind DNA. RNA dependent RNA polymerase. Replicates genomic and antigenomic RNA by recognizing replications specific signals. The early replication complex formed by the polyprotein P123 and nsP4 synthesizes minus-strand RNAs. The late replication complex composed of fully processed nsP1-nsP4 is responsible for the production of genomic and subgenomic plus-strand RNAs. The core catalytic domain of nsP4 also possesses terminal adenylyltransferase (TATase) activity that is probably involved in maintenance and repair of the poly(A) tail, an element required for replication of the viral genome. The polypeptide is Polyprotein P1234 (Getah virus (GETV)).